A 332-amino-acid polypeptide reads, in one-letter code: Myogenic-determination protein (332 aa).

The interval 22–54 is disordered; it reads HNGYGQPTHPGYGFSAYSQQNPIAHPGQNPHQT. One can recognise a bHLH domain in the interval 161–212; the sequence is DRRKAATMRERRRLRKVNEAFEILKRRTSSNPNQRLPKVEILRNAIEYIESL. Polar residues predominate over residues 293–309; that stretch reads TTSPIQNKATPSASDTQ. Residues 293-332 are disordered; that stretch reads TTSPIQNKATPSASDTQSPPSSGATAPTSLHVNFKRKCST. The segment covering 310–321 has biased composition (low complexity); sequence SPPSSGATAPTS.

As to quaternary structure, efficient DNA binding requires dimerization with another bHLH protein.

It localises to the nucleus. Its function is as follows. May play an important role in the early development of muscle. In Drosophila melanogaster (Fruit fly), this protein is Myogenic-determination protein (nau).